The following is a 206-amino-acid chain: Orotate phosphoribosyltransferase (206 aa).

5-phospho-alpha-D-ribose 1-diphosphate-binding positions include Arg93, Lys97, His99, and 119–127 (EDLISTGGT). An orotate-binding site is contributed by Ser123.

This sequence belongs to the purine/pyrimidine phosphoribosyltransferase family. PyrE subfamily. Homodimer. Mg(2+) is required as a cofactor.

It catalyses the reaction orotidine 5'-phosphate + diphosphate = orotate + 5-phospho-alpha-D-ribose 1-diphosphate. The protein operates within pyrimidine metabolism; UMP biosynthesis via de novo pathway; UMP from orotate: step 1/2. Its function is as follows. Catalyzes the transfer of a ribosyl phosphate group from 5-phosphoribose 1-diphosphate to orotate, leading to the formation of orotidine monophosphate (OMP). The protein is Orotate phosphoribosyltransferase of Bacillus caldolyticus.